The primary structure comprises 306 residues: Isoaspartyl peptidase/L-asparaginase (306 aa).

Thr-174 acts as the Nucleophile in catalysis. Residues 202–205 (RIGD) and 224–227 (TGKG) contribute to the substrate site.

This sequence belongs to the Ntn-hydrolase family. As to quaternary structure, heterotetramer of two alpha and two beta chains arranged as a dimer of alpha/beta heterodimers. Cleaved into an alpha and beta chain by autocatalysis; this activates the enzyme. The N-terminal residue of the beta subunit is responsible for the nucleophile hydrolase activity. In terms of tissue distribution, developing seeds.

The enzyme catalyses Cleavage of a beta-linked Asp residue from the N-terminus of a polypeptide.. Degrades proteins damaged by L-isoaspartyl residue formation (also known as beta-Asp residues). Also has L-asparaginase activity, which is used to liberate stored nitrogen during seed development. The sequence is that of Isoaspartyl peptidase/L-asparaginase from Lupinus arboreus (Tree lupine).